A 340-amino-acid chain; its full sequence is Thermopsin (340 aa).

The N-terminal stretch at 1–28 (MNFKSICLIILLSALIIPYIPQNIYFFP) is a signal peptide. Residues 29–41 (HRNTTGATISSGL) constitute a propeptide that is removed on maturation. Residues asparagine 31, asparagine 65, asparagine 85, asparagine 117, asparagine 148, asparagine 197, asparagine 277, asparagine 287, asparagine 327, and asparagine 334 are each glycosylated (N-linked (GlcNAc...) asparagine).

Belongs to the peptidase A5 family.

The protein localises to the secreted. The catalysed reaction is Specificity similar to pepsin A, prefers bulky hydrophobic side-chains on either side of the scissible bond.. Functionally, may represent a new class of acid proteases. It digests proteins and peptides in acidic solution. The chain is Thermopsin (thpS) from Sulfolobus acidocaldarius (strain ATCC 33909 / DSM 639 / JCM 8929 / NBRC 15157 / NCIMB 11770).